Here is an 861-residue protein sequence, read N- to C-terminus: APC membrane recruitment protein 3 (861 aa).

Disordered regions lie at residues 1-77 (MELK…PKGG), 179-206 (AEGK…PPGE), 261-289 (PSLE…GPLQ), 351-415 (PLCP…FPRD), 514-558 (RGPT…GGAT), 576-644 (GLLA…SQKE), 716-742 (MLEQ…STQD), and 786-822 (AHGS…SQQE). Residues 362–384 (SKASSIDTGTPKSEQPESVSTSD) show a composition bias toward polar residues. Residues 518 to 530 (PRAPPTPGQPAAP) are compositionally biased toward pro residues. A compositionally biased stretch (low complexity) spans 584 to 595 (ALGGATQGTGTL). The segment covering 598-609 (DASREEETRGHS) has biased composition (basic and acidic residues). Polar residues-rich tracts occupy residues 615–629 (SMES…TSGK) and 719–730 (QKQSSSSPSMTT).

The protein belongs to the Amer family.

It is found in the cell membrane. In terms of biological role, regulator of the canonical Wnt signaling pathway. Acts by specifically binding phosphatidylinositol 4,5-bisphosphate (PtdIns(4,5)P2), translocating to the cell membrane. This is APC membrane recruitment protein 3 (AMER3) from Homo sapiens (Human).